The sequence spans 552 residues: Protein FAM234A (552 aa).

Over 1–48 (MTDGKDLEAEIHPLKSENRKVPENAGALAGKEPRGTPAPQTRLSHCRT) the chain is Cytoplasmic. The helical; Signal-anchor for type II membrane protein transmembrane segment at 49–69 (AAFFLSLFACLLVVFVVSFII) threads the bilayer. The Extracellular segment spans residues 70–552 (PCPDRPALQG…LSRLRYRSEA (483 aa)). 3 N-linked (GlcNAc...) asparagine glycosylation sites follow: Asn115, Asn238, and Asn473.

The protein belongs to the FAM234 family.

It is found in the membrane. This chain is Protein FAM234A (FAM234A), found in Bos taurus (Bovine).